The primary structure comprises 671 residues: TBC1 domain family member 15 (671 aa).

Ala-2 bears the N-acetylalanine mark. Phosphoserine is present on residues Ser-23, Ser-32, Ser-70, Ser-205, and Ser-257. One can recognise a Rab-GAP TBC domain in the interval 329-539; that stretch reads GLSHSLRKQA…RLWEVMWTEL (211 aa). Residues Ser-623 and Ser-655 each carry the phosphoserine modification. The disordered stretch occupies residues 650–671; sequence EAKDDSPTQTLASPNACRLTPA. Thr-669 bears the Phosphothreonine mark.

Interacts with non-phosphorylated form of RAB8A; phosphorylation of RAB8A at 'Thr-72' disrupts this interaction. Interacts with ARMC12. As to expression, ubiquitous, with highest expression in heart, liver and testis and lower expression in brain, spleen, lung, kidney and skeletal muscle.

The protein localises to the cytoplasm. Functionally, acts as a GTPase activating protein for RAB7A. Does not act on RAB4, RAB5 or RAB6. The polypeptide is TBC1 domain family member 15 (Tbc1d15) (Mus musculus (Mouse)).